The following is a 112-amino-acid chain: MYSQSMVLLAAAFASFVAASPMALHGANSCSTGPVHCCNSVEHHTQPHANSLARGSGLVGLDIETLVGNIGLDCSPIGLSSTDCTAQTVCCDDVTFDGKVAVGCTPVNLSVL.

Residues M1–A19 form the signal peptide. Intrachain disulfides connect C30–C90, C37–C84, C38–C74, and C91–C104. Residue N108 is glycosylated (N-linked (GlcNAc...) asparagine).

The protein belongs to the fungal hydrophobin family. As to quaternary structure, self-assembles to form functional amyloid fibrils called rodlets. Self-assembly into fibrillar rodlets occurs spontaneously at hydrophobic:hydrophilic interfaces and the rodlets further associate laterally to form amphipathic monolayers.

It is found in the secreted. The protein localises to the cell wall. Aerial growth, conidiation, and dispersal of filamentous fungi in the environment rely upon a capability of their secreting small amphipathic proteins called hydrophobins (HPBs) with low sequence identity. Class I can self-assemble into an outermost layer of rodlet bundles on aerial cell surfaces, conferring cellular hydrophobicity that supports fungal growth, development and dispersal; whereas Class II form highly ordered films at water-air interfaces through intermolecular interactions but contribute nothing to the rodlet structure. Hydph17 is a class I hydrophobin involved in mycelial growth. In Pleurotus ostreatus (strain PC15) (Oyster mushroom), this protein is Class I hydrophobin 17.